A 718-amino-acid chain; its full sequence is MIMEIPAIKALSRYAQWVIWKKERDTKIPYNPNNGKKASSTDPLAWGDIDEAQAGLVRYGANGLGFVLTKSDPFVFIDLDHVLDENKRVKCEWARQLLKEIKSYTEISPSGDGLHVVVSGKLPDYIKHKTKFDDGSALEVYESGRYMTITGEVFDGRDDIKELDLSILGEFAEHKIETKNAPVQIESATTLDDEAIIDLMKRKGQWPDAPKDGDDWSSLDMSFANRLAFWCGKDIERMDRIFRQSPLMRQKWDRPTAGSTYGRITLKKACDFVDSVYDPALRNESDCPFEPYNEEGGPRNDKEEKDPLWLYKVLLTKGIEVWFDIKLEKYGIKRNNRVDYIAKSSLQQIVFEIIGKTPKNIAVPTYIGAYEPSKPEKWEEEGIKYINLFKPTPLMKVKPVKEMPEIVKNLLLNLFDYDAKSMGLFINWLAFIYQYKERTGVAWIFMGKQGTGKGLLVDLLKKIFEEHMSSNITDANLDSQFNPYLYNKLIVHLNEVSADNRKSRMLVKNRLKTWITDETLYINRKNMKEVEIKNFCNFIINSNETIPVDIEDSDRRFNVIECNNVLKEQEWWTTESYQEILNNAEGFAKYLAGIKVDRSKVNEVVMSEKKKAIVETTESVLKQIAKALTDRDIEWFLDNGLEGVVEKNIVNDFQWEELQEAITTGVIPNKYLMIIVEQILGDSKTITWIKRNIITPYQVGETTVVKMAGKPIRAIVVG.

The tract at residues Met-1–Ile-176 is polymerase. The segment at Met-1 to Tyr-292 is primase. Residues Asp-78 and Asp-80 each act as for polymerase activity in the active site. Mg(2+) is bound by residues Asp-78, Asp-80, Ser-108, and His-115. His-115 functions as the For polymerase activity in the catalytic mechanism. Glu-139 (for polymerase and primase activities) is an active-site residue. DNA is bound at residue Glu-304–Gly-718. The interval Pro-404–Gly-593 is helicase.

As to quaternary structure, homohexamer. It depends on Mg(2+) as a cofactor.

It catalyses the reaction DNA(n) + a 2'-deoxyribonucleoside 5'-triphosphate = DNA(n+1) + diphosphate. The catalysed reaction is ATP + H2O = ADP + phosphate + H(+). Multifunctional protein with primer synthesis, DNA polymerization, and DNA helicase activities. Recognizes a specific sequence motif 5'-TTTGGTTA-3' and initiates DNA synthesis. This is DNA Primase-polymerase (28) from Nitratiruptor phage NrS-1.